The sequence spans 262 residues: Acyl-[acyl-carrier-protein]--UDP-N-acetylglucosamine O-acyltransferase (262 aa).

Belongs to the transferase hexapeptide repeat family. LpxA subfamily. In terms of assembly, homotrimer.

The protein resides in the cytoplasm. The catalysed reaction is a (3R)-hydroxyacyl-[ACP] + UDP-N-acetyl-alpha-D-glucosamine = a UDP-3-O-[(3R)-3-hydroxyacyl]-N-acetyl-alpha-D-glucosamine + holo-[ACP]. It functions in the pathway glycolipid biosynthesis; lipid IV(A) biosynthesis; lipid IV(A) from (3R)-3-hydroxytetradecanoyl-[acyl-carrier-protein] and UDP-N-acetyl-alpha-D-glucosamine: step 1/6. In terms of biological role, involved in the biosynthesis of lipid A, a phosphorylated glycolipid that anchors the lipopolysaccharide to the outer membrane of the cell. In Haemophilus influenzae (strain ATCC 51907 / DSM 11121 / KW20 / Rd), this protein is Acyl-[acyl-carrier-protein]--UDP-N-acetylglucosamine O-acyltransferase.